Here is a 226-residue protein sequence, read N- to C-terminus: Histidine biosynthesis bifunctional protein HisIE (226 aa).

The interval 1–131 is phosphoribosyl-AMP cyclohydrolase; the sequence is MMPMNQEFIQ…STFNRPLSNT (131 aa). The segment at 132 to 226 is phosphoribosyl-ATP pyrophosphohydrolase; it reads CSELFEVIKD…KRRQSKSNPK (95 aa).

It in the N-terminal section; belongs to the PRA-CH family. In the C-terminal section; belongs to the PRA-PH family.

The protein localises to the cytoplasm. It catalyses the reaction 1-(5-phospho-beta-D-ribosyl)-ATP + H2O = 1-(5-phospho-beta-D-ribosyl)-5'-AMP + diphosphate + H(+). The enzyme catalyses 1-(5-phospho-beta-D-ribosyl)-5'-AMP + H2O = 1-(5-phospho-beta-D-ribosyl)-5-[(5-phospho-beta-D-ribosylamino)methylideneamino]imidazole-4-carboxamide. Its pathway is amino-acid biosynthesis; L-histidine biosynthesis; L-histidine from 5-phospho-alpha-D-ribose 1-diphosphate: step 2/9. It participates in amino-acid biosynthesis; L-histidine biosynthesis; L-histidine from 5-phospho-alpha-D-ribose 1-diphosphate: step 3/9. The protein is Histidine biosynthesis bifunctional protein HisIE of Prochlorococcus marinus (strain SARG / CCMP1375 / SS120).